Reading from the N-terminus, the 460-residue chain is MPTTPLRKTAMTTRQPIYKSLYFQVIVAIVIGILIGHFYPETGKALKPLGDGFIKLIKMVIAPIIFCTVVSGIAGMQNMKSVGKTGGYALLYFEIVSTIALLIGLIVVNVVQPGAGMNIDVSTLDASKIAAYVTAGKDQSIVGFILNVIPNTIVGAFANGDILQVLMFSVIFGFALHRLGSYGKPVLDFIDRFAHVMFNIINMIMKLAPIGAFGAMAFTIGAYGVSSLVQLGQLMICFYITCVLFVVLVLGSICRAHGFSIFKLVRYIREELLIVLGTSSSESALPRMLIKMERLGAQKSVVGLVIPTGYSFNLDGTSIYLTMAAVFIAQATNTHMDITHQITLLLVLLLSSKGAAGVTGSGFIVLAATLSAVGHLPVAGLALILGIDRFMSEARALTNLVGNAVATVVVAKWVGELDTDKLQSELASGGSAILETRPEDDLGVAEGPTPANAVNTTKTV.

The next 8 membrane-spanning stretches (helical) occupy residues leucine 21–phenylalanine 38, phenylalanine 53–glycine 75, tyrosine 88–valine 110, isoleucine 153–alanine 175, valine 196–phenylalanine 218, leucine 231–isoleucine 253, valine 301–methionine 323, and phenylalanine 363–leucine 385. The interval proline 438–valine 460 is disordered.

The protein belongs to the dicarboxylate/amino acid:cation symporter (DAACS) (TC 2.A.23) family.

The protein resides in the cell inner membrane. In terms of biological role, responsible for the transport of dicarboxylates such as succinate, fumarate, and malate from the periplasm across the membrane. The protein is C4-dicarboxylate transport protein of Pseudomonas syringae pv. tomato (strain ATCC BAA-871 / DC3000).